A 93-amino-acid polypeptide reads, in one-letter code: Small ribosomal subunit protein uS19 (93 aa).

This sequence belongs to the universal ribosomal protein uS19 family.

Protein S19 forms a complex with S13 that binds strongly to the 16S ribosomal RNA. This chain is Small ribosomal subunit protein uS19, found in Ehrlichia canis (strain Jake).